An 861-amino-acid chain; its full sequence is Homeobox-leucine zipper protein HOX29 (861 aa).

The segment at residues 2–65 (DASKYVRYTP…NRRCREKQRK (64 aa)) is a DNA-binding region (homeobox). The stretch at 57–99 (RRCREKQRKESSRLQALNRKLTAMNKLLMEENDRLQKQVSQLV) forms a coiled coil. One can recognise an START domain in the interval 162–390 (RDASPAGLMS…VAHEDTRSVI (229 aa)).

This sequence belongs to the HD-ZIP homeobox family. Class III subfamily. In terms of tissue distribution, expressed in roots, stems and leaf blades.

The protein localises to the nucleus. In terms of biological role, probable transcription factor. This Oryza sativa subsp. indica (Rice) protein is Homeobox-leucine zipper protein HOX29 (HOX29).